The chain runs to 560 residues: Dihydroxy-acid dehydratase (560 aa).

Residue Asp-78 participates in Mg(2+) binding. A [2Fe-2S] cluster-binding site is contributed by Cys-119. Mg(2+) is bound by residues Asp-120 and Lys-121. Lys-121 is subject to N6-carboxylysine. Cys-192 is a binding site for [2Fe-2S] cluster. Glu-446 contributes to the Mg(2+) binding site. The active-site Proton acceptor is the Ser-472.

The protein belongs to the IlvD/Edd family. As to quaternary structure, homodimer. [2Fe-2S] cluster is required as a cofactor. Requires Mg(2+) as cofactor.

The enzyme catalyses (2R)-2,3-dihydroxy-3-methylbutanoate = 3-methyl-2-oxobutanoate + H2O. It carries out the reaction (2R,3R)-2,3-dihydroxy-3-methylpentanoate = (S)-3-methyl-2-oxopentanoate + H2O. The protein operates within amino-acid biosynthesis; L-isoleucine biosynthesis; L-isoleucine from 2-oxobutanoate: step 3/4. Its pathway is amino-acid biosynthesis; L-valine biosynthesis; L-valine from pyruvate: step 3/4. Functionally, functions in the biosynthesis of branched-chain amino acids. Catalyzes the dehydration of (2R,3R)-2,3-dihydroxy-3-methylpentanoate (2,3-dihydroxy-3-methylvalerate) into 2-oxo-3-methylpentanoate (2-oxo-3-methylvalerate) and of (2R)-2,3-dihydroxy-3-methylbutanoate (2,3-dihydroxyisovalerate) into 2-oxo-3-methylbutanoate (2-oxoisovalerate), the penultimate precursor to L-isoleucine and L-valine, respectively. This chain is Dihydroxy-acid dehydratase, found in Anaeromyxobacter dehalogenans (strain 2CP-1 / ATCC BAA-258).